The sequence spans 136 residues: Large-conductance mechanosensitive channel (136 aa).

A run of 2 helical transmembrane segments spans residues 9 to 29 and 79 to 99; these read AFAS…GAAF and IQTI…VKAI.

It belongs to the MscL family. As to quaternary structure, homopentamer.

The protein resides in the cell inner membrane. Its function is as follows. Channel that opens in response to stretch forces in the membrane lipid bilayer. May participate in the regulation of osmotic pressure changes within the cell. The sequence is that of Large-conductance mechanosensitive channel from Shewanella baltica (strain OS223).